The chain runs to 340 residues: Glyceraldehyde-3-phosphate dehydrogenase (340 aa).

NAD(+) is bound by residues 12–13 (RI), D40, K85, and S128. D-glyceraldehyde 3-phosphate contacts are provided by residues 158 to 160 (SCT), T189, R204, 217 to 218 (TG), and R240. C159 acts as the Nucleophile in catalysis. An Isoglutamyl lysine isopeptide (Lys-Gln) (interchain with Q-Cter in protein Pup) cross-link involves residue K257. Position 321 (N321) interacts with NAD(+).

This sequence belongs to the glyceraldehyde-3-phosphate dehydrogenase family. In terms of assembly, homotetramer.

Its subcellular location is the cytoplasm. It carries out the reaction D-glyceraldehyde 3-phosphate + phosphate + NAD(+) = (2R)-3-phospho-glyceroyl phosphate + NADH + H(+). It participates in carbohydrate degradation; glycolysis; pyruvate from D-glyceraldehyde 3-phosphate: step 1/5. Catalyzes the oxidative phosphorylation of glyceraldehyde 3-phosphate (G3P) to 1,3-bisphosphoglycerate (BPG) using the cofactor NAD. The first reaction step involves the formation of a hemiacetal intermediate between G3P and a cysteine residue, and this hemiacetal intermediate is then oxidized to a thioester, with concomitant reduction of NAD to NADH. The reduced NADH is then exchanged with the second NAD, and the thioester is attacked by a nucleophilic inorganic phosphate to produce BPG. The chain is Glyceraldehyde-3-phosphate dehydrogenase (gapA) from Mycolicibacterium smegmatis (strain ATCC 700084 / mc(2)155) (Mycobacterium smegmatis).